The sequence spans 747 residues: Protein O-mannosyl-transferase 1 (747 aa).

Transmembrane regions (helical) follow at residues proline 30–leucine 50, phenylalanine 90–tryptophan 110, valine 121–alanine 141, leucine 176–phenylalanine 196, serine 205–isoleucine 225, methionine 228–isoleucine 248, and valine 267–leucine 287. 3 MIR domains span residues proline 318–proline 381, proline 392–valine 449, and serine 453–histidine 513. N-linked (GlcNAc...) asparagine glycans are attached at residues asparagine 435, asparagine 471, and asparagine 539. Transmembrane regions (helical) follow at residues isoleucine 597–tyrosine 617, tryptophan 636–leucine 656, and methionine 660–valine 680.

This sequence belongs to the glycosyltransferase 39 family.

It is found in the endoplasmic reticulum membrane. The enzyme catalyses a di-trans,poly-cis-dolichyl beta-D-mannosyl phosphate + L-seryl-[protein] = 3-O-(alpha-D-mannosyl)-L-seryl-[protein] + a di-trans,poly-cis-dolichyl phosphate + H(+). The catalysed reaction is a di-trans,poly-cis-dolichyl beta-D-mannosyl phosphate + L-threonyl-[protein] = 3-O-(alpha-D-mannosyl)-L-threonyl-[protein] + a di-trans,poly-cis-dolichyl phosphate + H(+). It participates in protein modification; protein glycosylation. In terms of biological role, transfers mannosyl residues to the hydroxyl group of serine or threonine residues. Coexpression of both POMT1 and POMT2 is necessary for enzyme activity, expression of either POMT1 or POMT2 alone is insufficient. Essentially dedicated to O-mannosylation of alpha-DAG1 and few other proteins but not of cadherins and protocaherins. In Rattus norvegicus (Rat), this protein is Protein O-mannosyl-transferase 1 (Pomt1).